Consider the following 413-residue polypeptide: Aspartate aminotransferase, cytoplasmic (413 aa).

L-aspartate contacts are provided by glycine 39 and tryptophan 141. The residue at position 149 (serine 149) is a Phosphoserine. L-aspartate is bound at residue asparagine 195. Lysine 259 is modified (N6-(pyridoxal phosphate)lysine). Lysine 318 is modified (N6-succinyllysine). Arginine 387 contacts L-aspartate.

It belongs to the class-I pyridoxal-phosphate-dependent aminotransferase family. In terms of assembly, homodimer. Pyridoxal 5'-phosphate is required as a cofactor. As to expression, expressed in neurons of the retina. Localizes to the inner and outer plexiform layers, the inner and outer nuclear layer and the outer segments of photoreceptors.

Its subcellular location is the cytoplasm. The catalysed reaction is L-aspartate + 2-oxoglutarate = oxaloacetate + L-glutamate. It catalyses the reaction L-cysteine + 2-oxoglutarate = 2-oxo-3-sulfanylpropanoate + L-glutamate. It carries out the reaction (2S)-2-aminobutanoate + 2-oxoglutarate = 2-oxobutanoate + L-glutamate. The enzyme catalyses 3-sulfino-L-alanine + 2-oxoglutarate = 3-sulfinopyruvate + L-glutamate. With respect to regulation, inhibited by calcium ions. Biosynthesis of L-glutamate from L-aspartate or L-cysteine. Important regulator of levels of glutamate, the major excitatory neurotransmitter of the vertebrate central nervous system. Acts as a scavenger of glutamate in brain neuroprotection. The aspartate aminotransferase activity is involved in hepatic glucose synthesis during development and in adipocyte glyceroneogenesis. Using L-cysteine as substrate, regulates levels of mercaptopyruvate, an important source of hydrogen sulfide. Mercaptopyruvate is converted into H(2)S via the action of 3-mercaptopyruvate sulfurtransferase (3MST). Hydrogen sulfide is an important synaptic modulator and neuroprotectant in the brain. In Mus musculus (Mouse), this protein is Aspartate aminotransferase, cytoplasmic.